A 319-amino-acid polypeptide reads, in one-letter code: N-acetylneuraminate lyase (319 aa).

Aceneuramate-binding residues include T51 and T52. Y143 (proton donor) is an active-site residue. The Schiff-base intermediate with substrate role is filled by K173. The aceneuramate site is built by S175, G199, D201, E202, and S218.

This sequence belongs to the DapA family. NanA subfamily. In terms of assembly, homotetramer.

It localises to the cytoplasm. The catalysed reaction is aceneuramate = aldehydo-N-acetyl-D-mannosamine + pyruvate. The protein operates within amino-sugar metabolism; N-acetylneuraminate degradation. Its function is as follows. Catalyzes the cleavage of N-acetylneuraminic acid (sialic acid) to form pyruvate and N-acetylmannosamine via a Schiff base intermediate. It prevents sialic acids from being recycled and returning to the cell surface. Involved in the N-glycolylneuraminic acid (Neu5Gc) degradation pathway. This chain is N-acetylneuraminate lyase, found in Sus scrofa (Pig).